We begin with the raw amino-acid sequence, 170 residues long: Lipoprotein signal peptidase (170 aa).

Transmembrane regions (helical) follow at residues 11-31, 41-61, 69-89, and 95-115; these read LSWL…KFYF, IVVI…AAFS, WQRW…VVWL, and NETW…GNLY. Active-site residues include Asp-125 and Asp-144. The chain crosses the membrane as a helical span at residues 136 to 156; the sequence is YFPAFNFADSAITVGAVMLAL.

Belongs to the peptidase A8 family.

It localises to the cell inner membrane. The catalysed reaction is Release of signal peptides from bacterial membrane prolipoproteins. Hydrolyzes -Xaa-Yaa-Zaa-|-(S,diacylglyceryl)Cys-, in which Xaa is hydrophobic (preferably Leu), and Yaa (Ala or Ser) and Zaa (Gly or Ala) have small, neutral side chains.. It participates in protein modification; lipoprotein biosynthesis (signal peptide cleavage). Its function is as follows. This protein specifically catalyzes the removal of signal peptides from prolipoproteins. In Pseudomonas fluorescens (strain Pf0-1), this protein is Lipoprotein signal peptidase.